We begin with the raw amino-acid sequence, 922 residues long: Neuropilin-1 (922 aa).

The signal sequence occupies residues 1-21 (MERGLPLLCATLALALALAGA). Over 22-855 (FRSDKCGGTI…PGNVLKTLDP (834 aa)) the chain is Extracellular. 3 disulfides stabilise this stretch: Cys-27–Cys-54, Cys-82–Cys-104, and Cys-147–Cys-173. CUB domains lie at 27–141 (CGGT…YEIF) and 147–265 (CSQN…YSVL). An N-linked (GlcNAc...) asparagine glycan is attached at Asn-150. Positions 195, 209, and 250 each coordinate Ca(2+). Cysteines 206 and 228 form a disulfide. 3 N-linked (GlcNAc...) asparagine glycosylation sites follow: Asn-261, Asn-300, and Asn-522. 2 disulfides stabilise this stretch: Cys-275/Cys-424 and Cys-431/Cys-583. 2 consecutive F5/8 type C domains span residues 275 to 424 (CMEA…VYGC) and 431 to 583 (CSGM…LLGC). Ser-612 carries an O-linked (Xyl...) (chondroitin sulfate) serine; alternate glycan. Ser-612 is a glycosylation site (O-linked (Xyl...) (heparan sulfate) serine; alternate). The 167-residue stretch at 645-811 (TYGFNCEFGW…NHIPQEDCAK (167 aa)) folds into the MAM domain. O-linked (Xyl...) (chondroitin sulfate) serine glycosylation is present at Ser-829. Asn-841 carries an N-linked (GlcNAc...) asparagine glycan. A helical membrane pass occupies residues 856–880 (ILITIIAMSALGVLLGAVCGVVLYC). The Cytoplasmic segment spans residues 881–922 (ACWHNGMSERNLSALENYNFELVDGVKLKKDKLNPQSNYSEA). The residue at position 893 (Ser-893) is a Phosphoserine.

Belongs to the neuropilin family. As to quaternary structure, homodimer, and heterodimer with NRP2. Binds PLXNB1. Interacts with FER. Interacts with VEGFA. Interacts with ABCB8/MITOSUR in mitochondria. As to expression, found in the embryonic nervous system. Expressed in dorsal root ganglia.

It is found in the mitochondrion membrane. The protein resides in the cell membrane. The protein localises to the cytoplasm. Cell-surface receptor involved in the development of the cardiovascular system, in angiogenesis, in the formation of certain neuronal circuits and in organogenesis outside the nervous system. Mediates the chemorepulsant activity of semaphorins. Recognizes a C-end rule (CendR) motif R/KXXR/K on its ligands which causes cellular internalization and vascular leakage. It binds to semaphorin 3A, the PLGF-2 isoform of PGF, the VEGF165 isoform of VEGFA and VEGFB. Coexpression with KDR results in increased VEGF165 binding to KDR as well as increased chemotaxis. Regulates VEGF-induced angiogenesis. Binding to VEGFA initiates a signaling pathway needed for motor neuron axon guidance and cell body migration, including for the caudal migration of facial motor neurons from rhombomere 4 to rhombomere 6 during embryonic development. Regulates mitochondrial iron transport via interaction with ABCB8/MITOSUR. This chain is Neuropilin-1 (Nrp1), found in Rattus norvegicus (Rat).